A 298-amino-acid chain; its full sequence is 4-diphosphocytidyl-2-C-methyl-D-erythritol kinase (298 aa).

Residue Lys11 is part of the active site. 94-104 (PMGGGLGGGSS) contributes to the ATP binding site. Residue Asp136 is part of the active site.

Belongs to the GHMP kinase family. IspE subfamily.

The catalysed reaction is 4-CDP-2-C-methyl-D-erythritol + ATP = 4-CDP-2-C-methyl-D-erythritol 2-phosphate + ADP + H(+). Its pathway is isoprenoid biosynthesis; isopentenyl diphosphate biosynthesis via DXP pathway; isopentenyl diphosphate from 1-deoxy-D-xylulose 5-phosphate: step 3/6. Functionally, catalyzes the phosphorylation of the position 2 hydroxy group of 4-diphosphocytidyl-2C-methyl-D-erythritol. The sequence is that of 4-diphosphocytidyl-2-C-methyl-D-erythritol kinase from Chromohalobacter salexigens (strain ATCC BAA-138 / DSM 3043 / CIP 106854 / NCIMB 13768 / 1H11).